A 148-amino-acid polypeptide reads, in one-letter code: UPF0260 protein mll2411 (148 aa).

This sequence belongs to the UPF0260 family.

In Mesorhizobium japonicum (strain LMG 29417 / CECT 9101 / MAFF 303099) (Mesorhizobium loti (strain MAFF 303099)), this protein is UPF0260 protein mll2411.